Here is a 403-residue protein sequence, read N- to C-terminus: Phosphomevalonate dehydratase large subunit (403 aa).

5 residues coordinate (R)-5-phosphomevalonate: glycine 48, valine 49, serine 50, asparagine 79, and proline 80. Cysteine 119 serves as a coordination point for [4Fe-4S] cluster. Residues glutamate 138 and serine 139 each contribute to the (R)-5-phosphomevalonate site. 2 residues coordinate [4Fe-4S] cluster: cysteine 301 and cysteine 358. Lysine 378 provides a ligand contact to (R)-5-phosphomevalonate.

It belongs to the AcnX type II large subunit family. Heterodimer composed of a large subunit (PMDh-L) and a small subunit (PMDh-S). The cofactor is [4Fe-4S] cluster.

It catalyses the reaction (R)-5-phosphomevalonate = (2E)-3-methyl-5-phosphooxypent-2-enoate + H2O. The protein operates within isoprenoid biosynthesis; isopentenyl diphosphate biosynthesis via mevalonate pathway. Functionally, component of a hydro-lyase that catalyzes the dehydration of mevalonate 5-phosphate (MVA5P) to form trans-anhydromevalonate 5-phosphate (tAHMP). Involved in the archaeal mevalonate (MVA) pathway, which provides fundamental precursors for isoprenoid biosynthesis, such as isopentenyl diphosphate (IPP) and dimethylallyl diphosphate (DMAPP). The protein is Phosphomevalonate dehydratase large subunit of Methanocaldococcus jannaschii (strain ATCC 43067 / DSM 2661 / JAL-1 / JCM 10045 / NBRC 100440) (Methanococcus jannaschii).